We begin with the raw amino-acid sequence, 1114 residues long: M-phase phosphoprotein 9 (1114 aa).

Disordered stretches follow at residues 1-55, 106-161, 183-207, 267-301, and 410-468; these read MEDF…KTGP, RPSC…DCHV, AKEP…VVQA, TSWA…WKPP, and VLEP…STIP. A compositionally biased stretch (polar residues) spans 24 to 51; it reads APQSLGLSLHANRSSPHLSTNGVSSFSG. Residues 106 to 119 show a composition bias toward low complexity; the sequence is RPSCSSSSVSEQVS. Residues 149 to 161 are compositionally biased toward polar residues; that stretch reads QPASSTSYPDCHV. Polar residues-rich tracts occupy residues 267-280 and 429-446; these read TSWA…QSKQ and HNPS…TTRA. The tract at residues 368–729 is required for its centrosomal localization; that stretch reads LSQVLTLDPG…EAQVKQAEHE (362 aa). The tract at residues 382–431 is interaction with CEP97; sequence KPKEHVAGIQAHGFLHALDDRISFSPDSVLEPSLSRHSDTDSSSQASHNP. A coiled-coil region spans residues 574 to 733; the sequence is DRCGQLDSAL…KQAEHESMLS (160 aa). Ser-710 is subject to Phosphoserine; by TTBK2. Lys-713 participates in a covalent cross-link: Glycyl lysine isopeptide (Lys-Gly) (interchain with G-Cter in ubiquitin). Ser-717 bears the Phosphoserine; by TTBK2 mark. 3 disordered regions span residues 727–755, 840–931, and 975–1002; these read EHES…TSDV, SWGT…GFSH, and EEKK…NGLK. The interval 730 to 963 is interaction with KIF24; sequence SMLSLRNGAK…PVSTLQQTTA (234 aa). The segment covering 852 to 868 has biased composition (polar residues); sequence SKLVNSRQTEPSVNTGR. Low complexity predominate over residues 881 to 898; sequence QTSASQRSSSLPPSSRKA. At Ser-926 the chain carries Phosphoserine. Positions 975-985 are enriched in basic and acidic residues; the sequence is EEKKYSEKNSD. Residues 1040 to 1105 are a coiled coil; sequence RTLAETERFF…GSVRMTLKKF (66 aa).

As to quaternary structure, interacts with CCP110, CEP97 and KIF24. TTBK2-mediated phosphorylation at Ser-710 and Ser-717, promotes its ubiquitination at Lys-713 leading to proteasomal degradation, loss of MPHOSPH9 facilitates the removal of the CP110-CEP97 complex from the mother centrioles, promoting the initiation of ciliogenesis. Phosphorylated in M (mitotic) phase. In terms of processing, ubiquitinated at Lys-713, leading to proteasomal degradation.

It is found in the cytoplasm. Its subcellular location is the cytoskeleton. The protein resides in the microtubule organizing center. The protein localises to the centrosome. It localises to the centriole. It is found in the golgi apparatus membrane. Its function is as follows. Negatively regulates cilia formation by recruiting the CP110-CEP97 complex (a negative regulator of ciliogenesis) at the distal end of the mother centriole in ciliary cells. At the beginning of cilia formation, MPHOSPH9 undergoes TTBK2-mediated phosphorylation and degradation via the ubiquitin-proteasome system and removes itself and the CP110-CEP97 complex from the distal end of the mother centriole, which subsequently promotes cilia formation. The polypeptide is M-phase phosphoprotein 9 (Mphosph9) (Mus musculus (Mouse)).